We begin with the raw amino-acid sequence, 206 residues long: Ras-related protein Rab-18 (206 aa).

M1 is modified (N-acetylmethionine). Positions 17, 20, 21, 22, 23, 34, 35, 40, 66, 123, and 125 each coordinate GTP. Residue S22 participates in Mg(2+) binding. 2 short sequence motifs (switch) span residues 31-45 (DTFD…GVDF) and 63-80 (DTAG…YYRG). T40 contributes to the Mg(2+) binding site. A Phosphoserine modification is found at S144. Residue A152 coordinates GTP. A lipid anchor (S-palmitoyl cysteine) is attached at C199. Cysteine methyl ester is present on C203. A lipid anchor (S-geranylgeranyl cysteine) is attached at C203. The propeptide at 204–206 (SVL) is removed in mature form.

This sequence belongs to the small GTPase superfamily. Rab family. As to quaternary structure, interacts (in GTP-bound form) with ZFYVE1. Interacts with ZW10 and this interaction is enhanced in the presence of ZFYVE1. Interacts with BSCL2. The cofactor is Mg(2+).

Its subcellular location is the endoplasmic reticulum membrane. It is found in the golgi apparatus. The protein localises to the cis-Golgi network membrane. It localises to the lipid droplet. The protein resides in the apical cell membrane. The catalysed reaction is GTP + H2O = GDP + phosphate + H(+). With respect to regulation, regulated by guanine nucleotide exchange factors (GEFs) which promote the exchange of bound GDP for free GTP. Regulated by GTPase activating proteins (GAPs) which increase the GTP hydrolysis activity at the ER membrane. Inhibited by GDP dissociation inhibitors (GDIs) which prevent Rab-GDP dissociation. The small GTPases Rab are key regulators of intracellular membrane trafficking, from the formation of transport vesicles to their fusion with membranes. Rabs cycle between an inactive GDP-bound form and an active GTP-bound form that is able to recruit to membranes different sets of downstream effectors directly responsible for vesicle formation, movement, tethering and fusion. RAB18 is required for the localization of ZFYVE1 to lipid droplets and for its function in mediating the formation of endoplasmic reticulum-lipid droplets (ER-LD) contacts. Also required for maintaining endoplasmic reticulum structure. Plays a role in apical endocytosis/recycling. Plays a key role in eye and brain development and neurodegeneration. This chain is Ras-related protein Rab-18 (RAB18), found in Bos taurus (Bovine).